Consider the following 463-residue polypeptide: Protoheme IX farnesyltransferase (463 aa).

The interval 1-193 (MAESRTFTGL…AYFRLMKPRL (193 aa)) is unknown. 4 consecutive transmembrane segments (helical) span residues 6–26 (TFTG…LAGA), 54–74 (LLVA…VVAM), 89–109 (AAII…AIVA), and 115–135 (ALPG…VLAL). A disordered region spans residues 144–170 (GSDDETPVKNPTPAPEPAGDDTPDRTP). 9 helical membrane passes run 193–213 (LMWL…GQTL), 218–238 (VLLT…FNHV), 265–285 (ALAF…QVNA), 286–306 (LVAV…TLVL), 314–334 (TVLG…AADG), 336–356 (VGLP…AHFY), 387–407 (IVYY…LTPL), 409–429 (WLYA…VVLL), and 441–461 (AFHA…VDAL). The segment at 194–460 (MWLLCLVAAA…AVLIAIVVDA (267 aa)) is protoheme IX prenyltransferase.

The protein in the C-terminal section; belongs to the UbiA prenyltransferase family. Protoheme IX farnesyltransferase subfamily.

Its subcellular location is the cell membrane. The catalysed reaction is heme b + (2E,6E)-farnesyl diphosphate + H2O = Fe(II)-heme o + diphosphate. The protein operates within porphyrin-containing compound metabolism; heme O biosynthesis; heme O from protoheme: step 1/1. Converts heme B (protoheme IX) to heme O by substitution of the vinyl group on carbon 2 of heme B porphyrin ring with a hydroxyethyl farnesyl side group. The polypeptide is Protoheme IX farnesyltransferase (ctaB) (Haloarcula marismortui (strain ATCC 43049 / DSM 3752 / JCM 8966 / VKM B-1809) (Halobacterium marismortui)).